A 513-amino-acid polypeptide reads, in one-letter code: ATP synthase subunit alpha (513 aa).

G169–T176 serves as a coordination point for ATP.

Belongs to the ATPase alpha/beta chains family. F-type ATPases have 2 components, CF(1) - the catalytic core - and CF(0) - the membrane proton channel. CF(1) has five subunits: alpha(3), beta(3), gamma(1), delta(1), epsilon(1). CF(0) has three main subunits: a(1), b(2) and c(9-12). The alpha and beta chains form an alternating ring which encloses part of the gamma chain. CF(1) is attached to CF(0) by a central stalk formed by the gamma and epsilon chains, while a peripheral stalk is formed by the delta and b chains.

It localises to the cell inner membrane. It carries out the reaction ATP + H2O + 4 H(+)(in) = ADP + phosphate + 5 H(+)(out). Produces ATP from ADP in the presence of a proton gradient across the membrane. The alpha chain is a regulatory subunit. This Citrobacter koseri (strain ATCC BAA-895 / CDC 4225-83 / SGSC4696) protein is ATP synthase subunit alpha.